Consider the following 342-residue polypeptide: Tetraacyldisaccharide 4'-kinase (342 aa).

68-75 lines the ATP pocket; the sequence is TVGGTGKT.

This sequence belongs to the LpxK family.

It catalyses the reaction a lipid A disaccharide + ATP = a lipid IVA + ADP + H(+). The protein operates within glycolipid biosynthesis; lipid IV(A) biosynthesis; lipid IV(A) from (3R)-3-hydroxytetradecanoyl-[acyl-carrier-protein] and UDP-N-acetyl-alpha-D-glucosamine: step 6/6. In terms of biological role, transfers the gamma-phosphate of ATP to the 4'-position of a tetraacyldisaccharide 1-phosphate intermediate (termed DS-1-P) to form tetraacyldisaccharide 1,4'-bis-phosphate (lipid IVA). The chain is Tetraacyldisaccharide 4'-kinase from Burkholderia lata (strain ATCC 17760 / DSM 23089 / LMG 22485 / NCIMB 9086 / R18194 / 383).